The sequence spans 1177 residues: Lon protease homolog, mitochondrial (1177 aa).

Disordered regions lie at residues R72–A197 and A353–T386. The span at R103–K150 shows a compositional bias: basic and acidic residues. Low complexity predominate over residues T154–S182. A Lon N-terminal domain is found at I203–H505. Over residues A353–D383 the composition is skewed to basic and acidic residues. Residue G657–T664 coordinates ATP. Over residues E883 to E916 the composition is skewed to basic and acidic residues. The disordered stretch occupies residues E883–V932. Residues D964 to G1150 form the Lon proteolytic domain. Residues S1056 and K1099 contribute to the active site.

The protein belongs to the peptidase S16 family. As to quaternary structure, homohexamer or homoheptamer. Organized in a ring with a central cavity.

Its subcellular location is the mitochondrion matrix. It catalyses the reaction Hydrolysis of proteins in presence of ATP.. In terms of biological role, ATP-dependent serine protease that mediates the selective degradation of misfolded, unassembled or oxidatively damaged polypeptides as well as certain short-lived regulatory proteins in the mitochondrial matrix. May also have a chaperone function in the assembly of inner membrane protein complexes. Participates in the regulation of mitochondrial gene expression and in the maintenance of the integrity of the mitochondrial genome. Binds to mitochondrial DNA in a site-specific manner. The sequence is that of Lon protease homolog, mitochondrial from Yarrowia lipolytica (strain CLIB 122 / E 150) (Yeast).